We begin with the raw amino-acid sequence, 355 residues long: Putative testis-specific Y-encoded-like protein 3 (355 aa).

Residues 1–131 (MADKRAGTPE…GEEKQEVAAE (131 aa)) form a disordered region. Positions 93–128 (ASEKAEDANKEEGAIFKKEPAEEVEKQQEGEEKQEV) are enriched in basic and acidic residues.

This sequence belongs to the nucleosome assembly protein (NAP) family.

In Homo sapiens (Human), this protein is Putative testis-specific Y-encoded-like protein 3 (TSPY26P).